Reading from the N-terminus, the 105-residue chain is MRGGGNMQQMMKQMQKMQKKMAQEQEKLKEERIVGTAGGGMVAVTVTGHKEVVDVEIKEEAVDPDDIEMLQDLVLAATNEAMNKADELTQERLGKHTQGLNIPGM.

Residues 1–33 form a disordered region; sequence MRGGGNMQQMMKQMQKMQKKMAQEQEKLKEERI. The span at 7-16 shows a compositional bias: low complexity; that stretch reads MQQMMKQMQK. Over residues 21–33 the composition is skewed to basic and acidic residues; sequence MAQEQEKLKEERI.

Belongs to the YbaB/EbfC family. As to quaternary structure, homodimer.

The protein localises to the cytoplasm. It localises to the nucleoid. Functionally, binds to DNA and alters its conformation. May be involved in regulation of gene expression, nucleoid organization and DNA protection. This Staphylococcus aureus (strain MW2) protein is Nucleoid-associated protein MW0434.